Reading from the N-terminus, the 347-residue chain is Ribosomal RNA large subunit methyltransferase M (347 aa).

S-adenosyl-L-methionine contacts are provided by residues S184, 217–220 (APGG), D236, D256, and D272. The Proton acceptor role is filled by K301.

This sequence belongs to the class I-like SAM-binding methyltransferase superfamily. RNA methyltransferase RlmE family. RlmM subfamily. Monomer.

It localises to the cytoplasm. The enzyme catalyses cytidine(2498) in 23S rRNA + S-adenosyl-L-methionine = 2'-O-methylcytidine(2498) in 23S rRNA + S-adenosyl-L-homocysteine + H(+). In terms of biological role, catalyzes the 2'-O-methylation at nucleotide C2498 in 23S rRNA. This is Ribosomal RNA large subunit methyltransferase M from Xanthomonas axonopodis pv. citri (strain 306).